Here is a 272-residue protein sequence, read N- to C-terminus: HTH-type transcriptional repressor AllR (272 aa).

Residues 1 to 20 (MTEVRRRGRPGQAEPTAQKG) form a disordered region. The HTH iclR-type domain maps to 21 to 83 (AQALERGIAI…SQLGWWHIGL (63 aa)). Positions 43–62 (VSDISGSLDLPLSTTFRLLK) form a DNA-binding region, H-T-H motif. The 170-residue stretch at 98-267 (VLSVAGPFMH…AKDISTALGL (170 aa)) folds into the IclR-ED domain. Glyoxylate is bound by residues 154–156 (SGA), Asp207, Cys217, and 234–236 (SIS).

Its function is as follows. Negative regulator of allantoin and glyoxylate utilization operons. Binds to the gcl promoter and to the allS-allA intergenic region. The chain is HTH-type transcriptional repressor AllR (allR) from Salmonella paratyphi A (strain ATCC 9150 / SARB42).